Here is a 631-residue protein sequence, read N- to C-terminus: Phosphomethylpyrimidine synthase (631 aa).

Substrate contacts are provided by residues N239, M268, Y297, H333, 353–355 (SRG), 394–397 (DGLR), and E433. Position 437 (H437) interacts with Zn(2+). Position 460 (Y460) interacts with substrate. H501 contributes to the Zn(2+) binding site. Positions 581, 584, and 589 each coordinate [4Fe-4S] cluster.

It belongs to the ThiC family. As to quaternary structure, homodimer. [4Fe-4S] cluster is required as a cofactor.

The enzyme catalyses 5-amino-1-(5-phospho-beta-D-ribosyl)imidazole + S-adenosyl-L-methionine = 4-amino-2-methyl-5-(phosphooxymethyl)pyrimidine + CO + 5'-deoxyadenosine + formate + L-methionine + 3 H(+). Its pathway is cofactor biosynthesis; thiamine diphosphate biosynthesis. Its function is as follows. Catalyzes the synthesis of the hydroxymethylpyrimidine phosphate (HMP-P) moiety of thiamine from aminoimidazole ribotide (AIR) in a radical S-adenosyl-L-methionine (SAM)-dependent reaction. This Klebsiella pneumoniae (strain 342) protein is Phosphomethylpyrimidine synthase.